The following is a 583-amino-acid chain: Propane 2-monooxygenase operon transcriptional activator MimR (583 aa).

The 194-residue stretch at 320 to 513 (LAGQSSSFRR…LRHVLTETVR (194 aa)) folds into the Sigma-54 factor interaction domain. Residues 349-356 (ERGSGRTY) and 395-404 (SADFAVIVSD) each bind ATP.

In terms of biological role, acts as a transcriptional activator of the mimABCD operon encoding the propane 2-monooxygenase complex. This Mycolicibacterium smegmatis (strain ATCC 700084 / mc(2)155) (Mycobacterium smegmatis) protein is Propane 2-monooxygenase operon transcriptional activator MimR.